We begin with the raw amino-acid sequence, 320 residues long: ATP-dependent 6-phosphofructokinase (320 aa).

Position 12 (G12) interacts with ATP. An ADP-binding site is contributed by 22 to 26; that stretch reads RGVVR. ATP-binding positions include 73–74 and 103–106; these read RF and GDGS. A Mg(2+)-binding site is contributed by D104. Substrate is bound at residue 126–128; that stretch reads TID. D128 functions as the Proton acceptor in the catalytic mechanism. R155 is a binding site for ADP. Substrate-binding positions include R163 and 170 to 172; that span reads MGR. ADP contacts are provided by residues 186–188, K212, and 214–216; these read GCE and KKH. Substrate-binding positions include E223, R244, and 250-253; that span reads HIQR.

It belongs to the phosphofructokinase type A (PFKA) family. ATP-dependent PFK group I subfamily. Prokaryotic clade 'B1' sub-subfamily. Homotetramer. It depends on Mg(2+) as a cofactor.

The protein resides in the cytoplasm. It carries out the reaction beta-D-fructose 6-phosphate + ATP = beta-D-fructose 1,6-bisphosphate + ADP + H(+). Its pathway is carbohydrate degradation; glycolysis; D-glyceraldehyde 3-phosphate and glycerone phosphate from D-glucose: step 3/4. With respect to regulation, allosterically activated by ADP and other diphosphonucleosides, and allosterically inhibited by phosphoenolpyruvate. In terms of biological role, catalyzes the phosphorylation of D-fructose 6-phosphate to fructose 1,6-bisphosphate by ATP, the first committing step of glycolysis. The chain is ATP-dependent 6-phosphofructokinase from Edwardsiella ictaluri (strain 93-146).